Consider the following 670-residue polypeptide: Solute carrier organic anion transporter family member 1A1 (670 aa).

Residues 1-20 (MEETEKKIATQEGRLFSKMK) are Cytoplasmic-facing. The chain crosses the membrane as a helical span at residues 21–40 (VFLLSLTCACLTKSLSGVYM). The Extracellular segment spans residues 41–59 (NSMLTQIERQFDISTSVAG). A helical membrane pass occupies residues 60 to 80 (LINGSFEIGNLFFIVFVSYFG). Residues 81 to 86 (TKLHRP) lie on the Cytoplasmic side of the membrane. Residues 87–111 (VVIGIGCVIMGLGCLLMSLPHFFMG) form a helical membrane-spanning segment. The Extracellular segment spans residues 112–155 (RYEYETTISPTGNLSSNSFLCMENRTQTLKPTQDPAECVKEMKS). N-linked (GlcNAc...) asparagine glycosylation is found at asparagine 124 and asparagine 135. The chain crosses the membrane as a helical span at residues 156 to 184 (LMWICVMVGNIIRGIGETPIVPLGISYIE). Over 185–203 (DFAKSENSPLYIGILEMGK) the chain is Cytoplasmic. The chain crosses the membrane as a helical span at residues 204–224 (VAGPIFGLLLGSYCAQIYVDI). At 225-242 (GSVNTDDLTITPSDTRWV) the chain is on the extracellular side. The chain crosses the membrane as a helical span at residues 243 to 267 (GAWWIGFLVCAGVNILTSIPFFFLP). At 268–311 (KALPKKGQQENVAVTKDGKVEKYGGQAREENLGITKDFLTFMKR) the chain is on the cytoplasmic side. Residues 312–333 (LFCNPIYMLFILTSVLQVNGFI) form a helical membrane-spanning segment. The Extracellular segment spans residues 334–353 (NKFTFLPKYLEQQYGKSTAE). A helical transmembrane segment spans residues 354–377 (AIFLIGVYSLPPICLGYLIGGFIM). Over 378 to 381 (KKFK) the chain is Cytoplasmic. A helical transmembrane segment spans residues 382–405 (ITVKKAAYLAFCLSVFEYLLFLCH). Over 406-513 (FMLTCDNAAV…PECANRLQYF (108 aa)) the chain is Extracellular. Residues 433 to 488 (SKVLADCNTRCSCSTNTWDPVCGDNGVAYMSACLAGCKKFVGTGTNMVFQDCSCIQ) enclose the Kazal-like domain. 3 disulfide bridges follow: cysteine 439/cysteine 469, cysteine 445/cysteine 465, and cysteine 454/cysteine 486. Asparagine 492 carries an N-linked (GlcNAc...) asparagine glycan. Residues 514–536 (LILTIIISFIYSLTAIPGYMVFL) traverse the membrane as a helical segment. The Cytoplasmic portion of the chain corresponds to 537 to 545 (RCVKSEEKS). A helical transmembrane segment spans residues 546 to 571 (LGVGLHTFCIRVFAGIPAPVYFGALI). At 572-605 (DRTCLHWGTLKCGQRGACRMYDINSFRHIYLGLP) the chain is on the extracellular side. The chain crosses the membrane as a helical span at residues 606–623 (IALRGSSYLPAFFILILM). Topologically, residues 624 to 670 (RKFQFPGDIDSSATDHTEMMLGEKESEHTDVHGSPQVENDGELKTKL) are cytoplasmic. Phosphoserine is present on residues serine 634 and serine 635. A compositionally biased stretch (basic and acidic residues) spans 645–654 (GEKESEHTDV). Residues 645 to 670 (GEKESEHTDVHGSPQVENDGELKTKL) are disordered.

It belongs to the organo anion transporter (TC 2.A.60) family. In terms of assembly, binds to PDZK1. Interaction with PDZK1 is required for expression on hepatocyte surface. Glycosylated. In terms of tissue distribution, highly expressed in liver and kidney, and at lower levels in brain, lung, skeletal muscle and proximal colon.

The protein localises to the basolateral cell membrane. The catalysed reaction is estrone 3-sulfate(out) + hydrogencarbonate(in) = estrone 3-sulfate(in) + hydrogencarbonate(out). It carries out the reaction taurocholate(out) + hydrogencarbonate(in) = taurocholate(in) + hydrogencarbonate(out). It catalyses the reaction L-thyroxine(out) = L-thyroxine(in). The enzyme catalyses prostaglandin E2(out) = prostaglandin E2(in). The catalysed reaction is 17beta-estradiol 17-O-(beta-D-glucuronate)(out) = 17beta-estradiol 17-O-(beta-D-glucuronate)(in). It carries out the reaction dehydroepiandrosterone 3-sulfate(out) = dehydroepiandrosterone 3-sulfate(in). Functionally, mediates the Na(+)-independent transport of organic anions such as steroid sulfate conjugates (dehydroepiandrosterone sulfate (DHEAS), 17-beta-glucuronosyl estradiol, estrone-3-sulfate), conjugated (taurocholate) and unconjugated (cholate) bile acids, prostaglandin E2 (PGE2) and L-thyroxine T4. Also capable of transporting sulfobromophthalein (BSP), ouabain and gadoxetate. Hydrogencarbonate/HCO3(-) acts as the probable counteranion that exchanges for organic anions. Shows a pH-sensitive substrate specificity which may be ascribed to the protonation state of the binding site and leads to a stimulation of substrate transport in an acidic microenvironment. This chain is Solute carrier organic anion transporter family member 1A1, found in Rattus norvegicus (Rat).